The following is a 307-amino-acid chain: Taste receptor type 2 member 41 (307 aa).

Residues Met-1 to Ala-7 are Extracellular-facing. A helical membrane pass occupies residues Phe-8–Val-28. Topologically, residues Leu-29–Arg-40 are cytoplasmic. Residues Leu-41–Val-61 form a helical membrane-spanning segment. Residues Gly-62 to His-88 lie on the Extracellular side of the membrane. The helical transmembrane segment at Trp-89–Val-109 threads the bilayer. At Lys-110–Trp-129 the chain is on the cytoplasmic side. The helical transmembrane segment at Val-130–Trp-150 threads the bilayer. Over Val-151 to Ser-183 the chain is Extracellular. Asn-167 carries an N-linked (GlcNAc...) asparagine glycan. A helical transmembrane segment spans residues Leu-184 to Ile-204. At Asn-205 to Lys-234 the chain is on the cytoplasmic side. The helical transmembrane segment at Ser-235–Thr-255 threads the bilayer. Residues Lys-256–Phe-264 are Extracellular-facing. The helical transmembrane segment at Tyr-265–Phe-285 threads the bilayer. Over Ser-286 to Ala-307 the chain is Cytoplasmic.

This sequence belongs to the G-protein coupled receptor T2R family.

The protein localises to the membrane. Receptor that may play a role in the perception of bitterness and is gustducin-linked. May play a role in sensing the chemical composition of the gastrointestinal content. The activity of this receptor may stimulate alpha gustducin, mediate PLC-beta-2 activation and lead to the gating of TRPM5. The chain is Taste receptor type 2 member 41 (TAS2R41) from Pongo pygmaeus (Bornean orangutan).